The following is a 206-amino-acid chain: ATP synthase subunit b (206 aa).

The chain crosses the membrane as a helical span at residues 14-34 (VMMPAAVCAAVIGLSALGFAA).

The protein belongs to the ATPase B chain family. In terms of assembly, F-type ATPases have 2 components, F(1) - the catalytic core - and F(0) - the membrane proton channel. F(1) has five subunits: alpha(3), beta(3), gamma(1), delta(1), epsilon(1). F(0) has three main subunits: a(1), b(2) and c(10-14). The alpha and beta chains form an alternating ring which encloses part of the gamma chain. F(1) is attached to F(0) by a central stalk formed by the gamma and epsilon chains, while a peripheral stalk is formed by the delta and b chains.

The protein localises to the cell inner membrane. Its function is as follows. F(1)F(0) ATP synthase produces ATP from ADP in the presence of a proton or sodium gradient. F-type ATPases consist of two structural domains, F(1) containing the extramembraneous catalytic core and F(0) containing the membrane proton channel, linked together by a central stalk and a peripheral stalk. During catalysis, ATP synthesis in the catalytic domain of F(1) is coupled via a rotary mechanism of the central stalk subunits to proton translocation. Component of the F(0) channel, it forms part of the peripheral stalk, linking F(1) to F(0). This is ATP synthase subunit b from Geobacter metallireducens (strain ATCC 53774 / DSM 7210 / GS-15).